The sequence spans 199 residues: ATP-dependent Clp protease proteolytic subunit (199 aa).

Ser-98 serves as the catalytic Nucleophile. Residue His-123 is part of the active site.

This sequence belongs to the peptidase S14 family. Fourteen ClpP subunits assemble into 2 heptameric rings which stack back to back to give a disk-like structure with a central cavity, resembling the structure of eukaryotic proteasomes.

The protein localises to the cytoplasm. The catalysed reaction is Hydrolysis of proteins to small peptides in the presence of ATP and magnesium. alpha-casein is the usual test substrate. In the absence of ATP, only oligopeptides shorter than five residues are hydrolyzed (such as succinyl-Leu-Tyr-|-NHMec, and Leu-Tyr-Leu-|-Tyr-Trp, in which cleavage of the -Tyr-|-Leu- and -Tyr-|-Trp bonds also occurs).. Cleaves peptides in various proteins in a process that requires ATP hydrolysis. Has a chymotrypsin-like activity. Plays a major role in the degradation of misfolded proteins. This Clostridium botulinum (strain Alaska E43 / Type E3) protein is ATP-dependent Clp protease proteolytic subunit.